Reading from the N-terminus, the 119-residue chain is Large ribosomal subunit protein bL20 (119 aa).

It belongs to the bacterial ribosomal protein bL20 family.

Functionally, binds directly to 23S ribosomal RNA and is necessary for the in vitro assembly process of the 50S ribosomal subunit. It is not involved in the protein synthesizing functions of that subunit. The protein is Large ribosomal subunit protein bL20 of Thermoanaerobacter pseudethanolicus (strain ATCC 33223 / 39E) (Clostridium thermohydrosulfuricum).